Reading from the N-terminus, the 285-residue chain is 2-dehydro-3-deoxyphosphooctonate aldolase (285 aa).

It belongs to the KdsA family.

It localises to the cytoplasm. It carries out the reaction D-arabinose 5-phosphate + phosphoenolpyruvate + H2O = 3-deoxy-alpha-D-manno-2-octulosonate-8-phosphate + phosphate. It functions in the pathway carbohydrate biosynthesis; 3-deoxy-D-manno-octulosonate biosynthesis; 3-deoxy-D-manno-octulosonate from D-ribulose 5-phosphate: step 2/3. It participates in bacterial outer membrane biogenesis; lipopolysaccharide biosynthesis. This Bordetella parapertussis (strain 12822 / ATCC BAA-587 / NCTC 13253) protein is 2-dehydro-3-deoxyphosphooctonate aldolase.